Reading from the N-terminus, the 695-residue chain is DNA ligase (695 aa).

Residues 36–40 (DADYD), 85–86 (SL), and Glu-123 each bind NAD(+). Catalysis depends on Lys-125, which acts as the N6-AMP-lysine intermediate. NAD(+) is bound by residues Arg-146, Glu-182, Lys-318, and Lys-342. Zn(2+) contacts are provided by Cys-436, Cys-439, Cys-454, and Cys-460. A BRCT domain is found at 617 to 695 (LQSGDLAGKT…EDGLKALLSQ (79 aa)).

The protein belongs to the NAD-dependent DNA ligase family. LigA subfamily. Requires Mg(2+) as cofactor. Mn(2+) is required as a cofactor.

It carries out the reaction NAD(+) + (deoxyribonucleotide)n-3'-hydroxyl + 5'-phospho-(deoxyribonucleotide)m = (deoxyribonucleotide)n+m + AMP + beta-nicotinamide D-nucleotide.. Functionally, DNA ligase that catalyzes the formation of phosphodiester linkages between 5'-phosphoryl and 3'-hydroxyl groups in double-stranded DNA using NAD as a coenzyme and as the energy source for the reaction. It is essential for DNA replication and repair of damaged DNA. This Bordetella avium (strain 197N) protein is DNA ligase.